Reading from the N-terminus, the 513-residue chain is ATP synthase subunit alpha 2 (513 aa).

169-176 contacts ATP; that stretch reads GDRQTGKT.

It belongs to the ATPase alpha/beta chains family. F-type ATPases have 2 components, CF(1) - the catalytic core - and CF(0) - the membrane proton channel. CF(1) has five subunits: alpha(3), beta(3), gamma(1), delta(1), epsilon(1). CF(0) has three main subunits: a(1), b(2) and c(9-12). The alpha and beta chains form an alternating ring which encloses part of the gamma chain. CF(1) is attached to CF(0) by a central stalk formed by the gamma and epsilon chains, while a peripheral stalk is formed by the delta and b chains.

It is found in the cell inner membrane. The catalysed reaction is ATP + H2O + 4 H(+)(in) = ADP + phosphate + 5 H(+)(out). Its function is as follows. Produces ATP from ADP in the presence of a proton gradient across the membrane. The alpha chain is a regulatory subunit. This chain is ATP synthase subunit alpha 2, found in Shewanella frigidimarina (strain NCIMB 400).